Reading from the N-terminus, the 710-residue chain is Aminopeptidase P2 (710 aa).

Residues 1 to 79 (MIPLTLSSPS…IRKAQTKVVV (79 aa)) constitute a chloroplast transit peptide. A peptide contacts are provided by Arg-147 and His-486. Residues Asp-506, Asp-517, and His-580 each coordinate Mn(2+). Residues His-580, His-589, and Glu-614 each contribute to the a peptide site. Mn(2+) is bound by residues Glu-614 and Glu-628.

It belongs to the peptidase M24B family. In terms of assembly, homodimer. The cofactor is Mn(2+).

It localises to the plastid. The protein localises to the chloroplast. The enzyme catalyses Release of any N-terminal amino acid, including proline, that is linked to proline, even from a dipeptide or tripeptide.. Its function is as follows. Catalyzes the removal of a penultimate prolyl residue from the N-termini of peptides, such as Arg-Pro-Pro. The chain is Aminopeptidase P2 from Arabidopsis thaliana (Mouse-ear cress).